We begin with the raw amino-acid sequence, 593 residues long: Elongation factor 4 (593 aa).

Positions 2-181 (DKIRNFCIIA…AVIERIPHPQ (180 aa)) constitute a tr-type G domain. Residues 14–19 (DHGKST) and 128–131 (NKCD) contribute to the GTP site.

Belongs to the TRAFAC class translation factor GTPase superfamily. Classic translation factor GTPase family. LepA subfamily.

The protein resides in the cell inner membrane. It catalyses the reaction GTP + H2O = GDP + phosphate + H(+). Functionally, required for accurate and efficient protein synthesis under certain stress conditions. May act as a fidelity factor of the translation reaction, by catalyzing a one-codon backward translocation of tRNAs on improperly translocated ribosomes. Back-translocation proceeds from a post-translocation (POST) complex to a pre-translocation (PRE) complex, thus giving elongation factor G a second chance to translocate the tRNAs correctly. Binds to ribosomes in a GTP-dependent manner. The polypeptide is Elongation factor 4 (Bacteroides fragilis (strain ATCC 25285 / DSM 2151 / CCUG 4856 / JCM 11019 / LMG 10263 / NCTC 9343 / Onslow / VPI 2553 / EN-2)).